The following is a 466-amino-acid chain: SVAFKAGVKEYKLTYYTPDYETKDTDILAAFRVTPQPGVPPEEAGAAVAAESSTGTWTTVWTDGLTSLDRYKGRCYHIEPVAGEESQFIAYVAYPLDLFEEGSVTNMFTSIVGNVFGFKALRALRLEDLRIPPAYSKTFQGPPHGIQVERDKLNKYGRPLLGCTIKPKLGLSAKNYGRAVYECLRGGLDFTKDDENVNSQPFMRWRDRFLFCAEAIYKAQAETGEIKGHYLNATAGTCEEMMKRAIFARELGVPIVMHDYLTGGFTANTSLAHYCRDNGLLLHIHRAMHAVIDRQKNHGMHFRVLAKALRMSGGDHIHAGTVVGKLEGEREITLGFVDLLRDDYIEKDRSRGIYFTQDWVSLPGVLPVASGGIHVWHMPALTEIFGDDSVLQFGGGTLGHPWGNAPGAVANRVALEACVQARNEGRDLAREGNEIIREAAKWSPELAAACEVWKEIKFEFPAMDTL.

K5 carries the N6,N6,N6-trimethyllysine modification. N114 and T164 together coordinate substrate. K166 functions as the Proton acceptor in the catalytic mechanism. Residue K168 participates in substrate binding. K192, D194, and E195 together coordinate Mg(2+). N6-carboxylysine is present on K192. Catalysis depends on H285, which acts as the Proton acceptor. 3 residues coordinate substrate: R286, H318, and S370.

The protein belongs to the RuBisCO large chain family. Type I subfamily. In terms of assembly, heterohexadecamer of 8 large chains and 8 small chains; disulfide-linked. The disulfide link is formed within the large subunit homodimers. Mg(2+) serves as cofactor. The disulfide bond which can form in the large chain dimeric partners within the hexadecamer appears to be associated with oxidative stress and protein turnover.

Its subcellular location is the plastid. It localises to the chloroplast. The catalysed reaction is 2 (2R)-3-phosphoglycerate + 2 H(+) = D-ribulose 1,5-bisphosphate + CO2 + H2O. It carries out the reaction D-ribulose 1,5-bisphosphate + O2 = 2-phosphoglycolate + (2R)-3-phosphoglycerate + 2 H(+). Its function is as follows. RuBisCO catalyzes two reactions: the carboxylation of D-ribulose 1,5-bisphosphate, the primary event in carbon dioxide fixation, as well as the oxidative fragmentation of the pentose substrate in the photorespiration process. Both reactions occur simultaneously and in competition at the same active site. This Betula nigra (River birch) protein is Ribulose bisphosphate carboxylase large chain.